A 124-amino-acid chain; its full sequence is Pal-related lipoprotein (124 aa).

Positions 1 to 18 (MRYRAVFPMLIIVFALSG) are cleaved as a signal peptide. Cys-19 carries the N-palmitoyl cysteine lipid modification. Cys-19 is lipidated: S-diacylglycerol cysteine.

It is found in the cell membrane. The sequence is that of Pal-related lipoprotein (slp) from Bacillus subtilis (strain 168).